A 343-amino-acid chain; its full sequence is Mas-related G-protein coupled receptor member F (343 aa).

The Extracellular portion of the chain corresponds to 1–44 (MAGNCSWEAHSTNQNKMCPGMSEALELYSRGFLTIEQIATLPPP). N-linked (GlcNAc...) asparagine glycosylation occurs at asparagine 4. The helical transmembrane segment at 45 to 66 (AVTNYIFLLLCLCGLVGNGLVL) threads the bilayer. Topologically, residues 67–82 (WFFGFSIKRTPFSIYF) are cytoplasmic. Residues 83-104 (LHLASADGIYLFSKAVIALLNM) form a helical membrane-spanning segment. The Extracellular segment spans residues 105-123 (GTFLGSFPDYVRRVSRIVG). Residues 124-144 (LCTFFAGVSLLPAISIERCVS) form a helical membrane-spanning segment. Topologically, residues 145 to 160 (VIFPMWYWRRRPKRLS) are cytoplasmic. A helical transmembrane segment spans residues 161 to 181 (AGVCALLWLLSFLVTSIHNYF). At 182–198 (CMFLGHEASGTACLNMD) the chain is on the extracellular side. A helical transmembrane segment spans residues 199 to 220 (ISLGILLFFLFCPLMVLPCLAL). Over 221–241 (ILHVECRARRRQRSAKLNHVV) the chain is Cytoplasmic. The helical transmembrane segment at 242 to 263 (LAIVSVFLVSSIYLGIDWFLFW) threads the bilayer. Over 264–273 (VFQIPAPFPE) the chain is Extracellular. A helical transmembrane segment spans residues 274-294 (YVTDLCICINSSAKPIVYFLA). Residues 295–343 (GRDKSQRLWEPLRVVFQRALRDGAEPGDAASSTPNTVTMEMQCPSGNAS) lie on the Cytoplasmic side of the membrane. The segment at 318-343 (AEPGDAASSTPNTVTMEMQCPSGNAS) is disordered. The span at 324-343 (ASSTPNTVTMEMQCPSGNAS) shows a compositional bias: polar residues.

This sequence belongs to the G-protein coupled receptor 1 family. Mas subfamily. As to expression, gut, vas deferens, uterus and aorta; barely detectable in liver, kidney, lung, and salivary gland. In the brain, markedly abundant in the cerebellum.

Its subcellular location is the cell membrane. In terms of biological role, orphan receptor. May bind to a neuropeptide and may regulate nociceptor function and/or development, including the sensation or modulation of pain. The polypeptide is Mas-related G-protein coupled receptor member F (Mrgprf) (Rattus norvegicus (Rat)).